Consider the following 95-residue polypeptide: Aspartyl/glutamyl-tRNA(Asn/Gln) amidotransferase subunit C (95 aa).

It belongs to the GatC family. In terms of assembly, heterotrimer of A, B and C subunits.

It carries out the reaction L-glutamyl-tRNA(Gln) + L-glutamine + ATP + H2O = L-glutaminyl-tRNA(Gln) + L-glutamate + ADP + phosphate + H(+). It catalyses the reaction L-aspartyl-tRNA(Asn) + L-glutamine + ATP + H2O = L-asparaginyl-tRNA(Asn) + L-glutamate + ADP + phosphate + 2 H(+). Allows the formation of correctly charged Asn-tRNA(Asn) or Gln-tRNA(Gln) through the transamidation of misacylated Asp-tRNA(Asn) or Glu-tRNA(Gln) in organisms which lack either or both of asparaginyl-tRNA or glutaminyl-tRNA synthetases. The reaction takes place in the presence of glutamine and ATP through an activated phospho-Asp-tRNA(Asn) or phospho-Glu-tRNA(Gln). The chain is Aspartyl/glutamyl-tRNA(Asn/Gln) amidotransferase subunit C from Nitrosomonas europaea (strain ATCC 19718 / CIP 103999 / KCTC 2705 / NBRC 14298).